The following is a 443-amino-acid chain: Glutamate--tRNA ligase 1 (443 aa).

A 'HIGH' region motif is present at residues 8-18 (PSPTGRLHVGN). Positions 239-243 (KLSKR) match the 'KMSKS' region motif. Residue Lys-242 coordinates ATP.

The protein belongs to the class-I aminoacyl-tRNA synthetase family. Glutamate--tRNA ligase type 1 subfamily. In terms of assembly, monomer.

The protein resides in the cytoplasm. The catalysed reaction is tRNA(Glu) + L-glutamate + ATP = L-glutamyl-tRNA(Glu) + AMP + diphosphate. Its function is as follows. Catalyzes the attachment of glutamate to tRNA(Glu) in a two-step reaction: glutamate is first activated by ATP to form Glu-AMP and then transferred to the acceptor end of tRNA(Glu). The polypeptide is Glutamate--tRNA ligase 1 (Rhizorhabdus wittichii (strain DSM 6014 / CCUG 31198 / JCM 15750 / NBRC 105917 / EY 4224 / RW1) (Sphingomonas wittichii)).